Consider the following 68-residue polypeptide: MKLSCGFLLIFLVLSAMIATFSEVEATVKCGGCNRKCCPGGCRSGKCINGKCQCYGRSDLNEEFENYQ.

Positions 1–26 (MKLSCGFLLIFLVLSAMIATFSEVEA) are cleaved as a signal peptide. 4 disulfides stabilise this stretch: C30-C38, C33-C54, C37-C47, and C42-C52. Residues 56-68 (GRSDLNEEFENYQ) constitute a propeptide that is removed on maturation.

As to expression, expressed by the venom gland.

The protein resides in the secreted. Probable weak potassium channel blocker. The protein is Peptide TsPep3 of Tityus serrulatus (Brazilian scorpion).